Reading from the N-terminus, the 217-residue chain is Grancalcin (217 aa).

4 EF-hand domains span residues 48-83 (SSAGDSVYTYFSAVAGQDGEVDAEELQRCLTQSGIN), 89-122 (FSLETCRIMIAMLDRDHTGKMGFNAFKELWAALN), 119-154 (AALNAWKENFMTVDQDGSGTVEHHELRQAIGLMGYR), and 155-180 (LSPQTLTTIVKRYSKNGRIFFDDYVA). Residues Asp65, Asp69, and Glu71 each contribute to the Ca(2+) site. Residues Asp132, Asp134, Ser136, Thr138, and Glu143 each coordinate Ca(2+).

As to quaternary structure, homodimer. Interacts with SRI and LCP1. As to expression, detected in neutrophils and macrophages (at protein level). Highly expressed in bone marrow.

The protein resides in the cytoplasm. Its subcellular location is the cytoplasmic granule membrane. Functionally, calcium-binding protein that may play a role in the adhesion of neutrophils to fibronectin. May play a role in the formation of focal adhesions. This chain is Grancalcin (GCA), found in Homo sapiens (Human).